The primary structure comprises 493 residues: Cysteine--tRNA ligase (493 aa).

Zn(2+) is bound at residue Cys29. Positions 31 to 41 (VTVYDLCHLGH) match the 'HIGH' region motif. The segment at 154-179 (KLSGRDPDDQQQGASGRTADGEESRK) is disordered. Zn(2+) contacts are provided by Cys213, His238, and Glu242. The short motif at 270 to 274 (KMSKS) is the 'KMSKS' region element. An ATP-binding site is contributed by Lys273.

Belongs to the class-I aminoacyl-tRNA synthetase family. In terms of assembly, monomer. Zn(2+) is required as a cofactor.

Its subcellular location is the cytoplasm. It catalyses the reaction tRNA(Cys) + L-cysteine + ATP = L-cysteinyl-tRNA(Cys) + AMP + diphosphate. The polypeptide is Cysteine--tRNA ligase (Synechococcus sp. (strain CC9605)).